Reading from the N-terminus, the 261-residue chain is Transcription factor BEE 3 (261 aa).

The span at 72 to 82 shows a compositional bias: low complexity; the sequence is NIQNNEESSSQ. Disordered regions lie at residues 72-158 and 242-261; these read NIQN…TDSH and VEMGQGRDGSSVFHSSSWTL. Positions 95 to 123 are enriched in polar residues; that stretch reads VSTSENSVSDQTLSTSSAQVSINGNISTK. Residues 135-146 show a composition bias toward basic and acidic residues; sequence NREEEKEREVVH. Positions 153 to 203 constitute a bHLH domain; that stretch reads QATDSHSIAERVRRGKINERLKCLQDIVPGCYKTMGMATMLDEIINYVQSL.

In terms of assembly, homodimer. Expressed in stems.

The protein resides in the nucleus. Its function is as follows. Positive regulator of brassinosteroid signaling. This is Transcription factor BEE 3 (BEE3) from Arabidopsis thaliana (Mouse-ear cress).